The primary structure comprises 202 residues: Peptide methionine sulfoxide reductase B1, chloroplastic (202 aa).

A chloroplast-targeting transit peptide spans 1–63; the sequence is MASSTRLTII…SSSPKPDNVQ (63 aa). The tract at residues 48–67 is disordered; it reads YSMGSSSSSPKPDNVQEAEK. A MsrB domain is found at 75-197; it reads ENEWKKRLTP…NSAALKLNAL (123 aa). Cysteine 114, cysteine 117, cysteine 163, and cysteine 166 together coordinate Zn(2+). Cysteine 186 serves as the catalytic Nucleophile.

The protein belongs to the MsrB Met sulfoxide reductase family. Zn(2+) is required as a cofactor. As to expression, expressed at low levels in stems, leaves, floral buds, flowers and siliques (at protein level).

It localises to the plastid. The protein localises to the chloroplast. The catalysed reaction is L-methionyl-[protein] + [thioredoxin]-disulfide + H2O = L-methionyl-(R)-S-oxide-[protein] + [thioredoxin]-dithiol. In terms of biological role, catalyzes the reduction of methionine sulfoxide (MetSO) to methionine in proteins. Specifically reduces the MetSO R-enantiomer. Plays a protective role against oxidative stress by restoring activity to proteins that have been inactivated by methionine oxidation. May play an essential function in association with MSRB2 in maintaining vegetative growth during environmental constraints, through the preservation of photosynthetic antennae. MSRB1 and MSRB2 account for most of the leaf peptide MSR capacity. The sequence is that of Peptide methionine sulfoxide reductase B1, chloroplastic from Arabidopsis thaliana (Mouse-ear cress).